The sequence spans 392 residues: Extracellular metalloproteinase 4 (392 aa).

The propeptide occupies 1-9 (VHSVVDYVS). Residues N27 and N176 are each glycosylated (N-linked (GlcNAc...) asparagine). H193 contributes to the Zn(2+) binding site. E194 is an active-site residue. H197 serves as a coordination point for Zn(2+). N-linked (GlcNAc...) asparagine glycosylation is found at N359 and N385.

It belongs to the peptidase M36 family. Requires Zn(2+) as cofactor.

Its subcellular location is the secreted. Its function is as follows. Secreted metalloproteinase probably acting as a virulence factor. The chain is Extracellular metalloproteinase 4 (MEP4) from Trichophyton violaceum.